Reading from the N-terminus, the 867-residue chain is E3 ubiquitin-protein ligase SH3RF1 (867 aa).

The RING-type zinc-finger motif lies at 12-53; that stretch reads CPVCLERLDATAKVLPCQHTFCRRCLLGIVGSRGELRCPECR. A disordered region spans residues 101–127; the sequence is AQGAGGSQRDPGPTGGQSQRVQAKSTP. The span at 116 to 125 shows a compositional bias: polar residues; it reads GQSQRVQAKS. SH3 domains are found at residues 132 to 191 and 194 to 257; these read PQLP…VIKP and QPPP…FNSA. The interval 265 to 328 is disordered; the sequence is DKPSEGGGDS…PPPQRHSMEI (64 aa). Over residues 275 to 285 the composition is skewed to low complexity; it reads SEGPSSSSSGP. An SH3 3 domain is found at 436 to 497; it reads QRPTVYVAMF…PGNYMSPVSR (62 aa). Residues 706–794 form a disordered region; the sequence is LSNKKKLRPS…APIAPPPRQP (89 aa). Residues 760-769 show a composition bias toward low complexity; it reads SELSMSSSSS. A compositionally biased stretch (polar residues) spans 770–784; that stretch reads NTDAVTHRSSPQDNT. Residues 808–867 form the SH3 4 domain; it reads IVCERYRVVVSYPPQSEAELELKEGDIVFVHKKREDGWFKGTLQRNGRTGLFPGSFVDSI.

Belongs to the SH3RF family. In terms of processing, autoubiquitinated. Ubiquitinated by SH3RF2, leading to proteasome-mediated degradation.

It localises to the cytoplasm. The protein resides in the perinuclear region. The protein localises to the cell projection. It is found in the lamellipodium. Its subcellular location is the golgi apparatus. It localises to the trans-Golgi network. It carries out the reaction S-ubiquitinyl-[E2 ubiquitin-conjugating enzyme]-L-cysteine + [acceptor protein]-L-lysine = [E2 ubiquitin-conjugating enzyme]-L-cysteine + N(6)-ubiquitinyl-[acceptor protein]-L-lysine.. It participates in protein modification; protein ubiquitination. Its function is as follows. Has E3 ubiquitin-protein ligase activity. In the absence of an external substrate, it can catalyze self-ubiquitination. Acts as a scaffold protein that contributes to the effective activation of the JNK signaling pathway. The polypeptide is E3 ubiquitin-protein ligase SH3RF1 (sh3rf1) (Danio rerio (Zebrafish)).